Here is a 181-residue protein sequence, read N- to C-terminus: GMP synthase [glutamine-hydrolyzing] subunit A (181 aa).

The Glutamine amidotransferase type-1 domain occupies Lys-2–Arg-181. Cys-72 acts as the Nucleophile in catalysis. Catalysis depends on residues His-159 and Glu-161.

In terms of assembly, heterodimer composed of a glutamine amidotransferase subunit (A) and a GMP-binding subunit (B).

The enzyme catalyses XMP + L-glutamine + ATP + H2O = GMP + L-glutamate + AMP + diphosphate + 2 H(+). The protein operates within purine metabolism; GMP biosynthesis; GMP from XMP (L-Gln route): step 1/1. Its function is as follows. Catalyzes the synthesis of GMP from XMP. In Methanothrix thermoacetophila (strain DSM 6194 / JCM 14653 / NBRC 101360 / PT) (Methanosaeta thermophila), this protein is GMP synthase [glutamine-hydrolyzing] subunit A.